The chain runs to 922 residues: MDYRNTLNLPETDFPMRGNLPQREPEILQKWEEEDIYATVQKARAGRPKFVLHDGPPYANGDIHLGHALNKVIKDIIVKYKTMAGFDAPYVPGWDTHGLPIEQQVIKKLGVNRHAVSVVEFRRMCKEYAKKYISIQKEQFKRLGVRGDWQNPYLTLEKEYEAAQIGVFGKMARKKYIYKGLKPVYWCPSCETALAEAEIEYAEKTSHAIYVKFPVKEGKGVLTDENTFVIIWTTTPWTLPANLAITLHEEFSYVQVQVEKEHWLVAEGMLESLRSLWNLELPVEKRFVGKELEGVICKHPFIERDSVLILGEHVTLEAGTGCVHTAPGHGEEDFNVGKKYGLPVLCPVDHQGKFTAEGGAYAGMKVDKANPVIIEDLKNLHALVHEDKIKHSYAHCWRCNNPIIYRATEQWFASIDGFRKAALEEIDKVQWIPSWGKDRIYNMIADRGDWCISRQRTWGVPIPIFYCEDCGKEIISDETIAKVQEIFREEGSDAWFLRPAAELLPEGFTCACGGKSFRKETDIMDVWFDSGTSHTSVLMERKELAWPADLYMEGSDQHRGWFNSSLSTSVAAYGKAPYKAVLTHGFLVDEKGRKMSKSLGNGVDPLQVTKEMGADILRLWVCAADYKNDVAVSPRIMKQMSEAYRKIRNTLRFLLSNLNDFDPAKDRVAYKDLPEIDRWALLQLGKVTQRVLQGYEKYEFHWVYHSVHNFCAVELSAIYLDIVKDRLYVEGKNSTLRRASQTVLYDVLNALVRLMAPVLTYTADEIWPYVPGVPAGSHVQTEEMPEALPQWLDEALEKKWDTLLAVRSEVTKALEKARQDKLINHPLTAQVDLYPNAELEGFLRGIPNLSEIFIVSAVQLHSAGEEKPEGLSMAEDLAGFGIAVNSAAGEKCERCWIYDTGVGENQEHPTLCPRCASVVSHL.

Residues 57-67 carry the 'HIGH' region motif; that stretch reads PYANGDIHLGH. Position 553 (Glu553) interacts with L-isoleucyl-5'-AMP. Residues 594 to 598 carry the 'KMSKS' region motif; the sequence is KMSKS. Lys597 is a binding site for ATP. Zn(2+) contacts are provided by Cys892, Cys895, Cys912, and Cys915.

It belongs to the class-I aminoacyl-tRNA synthetase family. IleS type 1 subfamily. In terms of assembly, monomer. The cofactor is Zn(2+).

It localises to the cytoplasm. The enzyme catalyses tRNA(Ile) + L-isoleucine + ATP = L-isoleucyl-tRNA(Ile) + AMP + diphosphate. Its function is as follows. Catalyzes the attachment of isoleucine to tRNA(Ile). As IleRS can inadvertently accommodate and process structurally similar amino acids such as valine, to avoid such errors it has two additional distinct tRNA(Ile)-dependent editing activities. One activity is designated as 'pretransfer' editing and involves the hydrolysis of activated Val-AMP. The other activity is designated 'posttransfer' editing and involves deacylation of mischarged Val-tRNA(Ile). This is Isoleucine--tRNA ligase from Desulfitobacterium hafniense (strain DSM 10664 / DCB-2).